The sequence spans 171 residues: Ribosome maturation factor RimM (171 aa).

In terms of domain architecture, PRC barrel spans 97 to 170 (EGEYYYHEII…LVTIHVMEGL (74 aa)).

This sequence belongs to the RimM family. In terms of assembly, binds ribosomal protein uS19.

The protein resides in the cytoplasm. An accessory protein needed during the final step in the assembly of 30S ribosomal subunit, possibly for assembly of the head region. Essential for efficient processing of 16S rRNA. May be needed both before and after RbfA during the maturation of 16S rRNA. It has affinity for free ribosomal 30S subunits but not for 70S ribosomes. This chain is Ribosome maturation factor RimM, found in Bacillus cereus (strain ZK / E33L).